A 525-amino-acid polypeptide reads, in one-letter code: MALDIHAHRILILDFGSQYTQLIARRVREIGVYCELHPFDMDDEAIREFAPKGVILAGGPESVHEANSPRCPQAVFDLGVPVFGICYGMQTMAEQLGGKVEGSELREFGYARVDVVGKSRLLDGIEDHVDADGLFGLDVWMSHGDKVTKMPEDFHILASTPSCPIAGMFNDDLRYYGVQFHPEVTHTKQGGRILSRFILDICGCEALWTPSKIAEDAIAQIRAQVGTDNVLLGLSGGVDSSVVAALLHKAIGDQLTCVFVDNGLLRLHEGEQVMAMFAENMGVKVIRANAEEQFLNNLAGEADPEKKRKIIGRTFIDVFDAESCKLENIKYLAQGTIYPDVIESAGAKSGKAHVIKSHHNVGGLPEEMNLKLVEPLRELFKDEVRRLGLELGLPYDMVYRHPFPGPGLGVRILGEVKKEYADLLRRADHIFIEELRKADWYHKVSQAFVVFQPVKSVGVVGDGRRYAWVVALRAVETIDFMTARWAHLPYELLETVSGRIINEIEGISRVTYDVSSKPPATIEWE.

Residues 9–207 (RILILDFGSQ…ILDICGCEAL (199 aa)) form the Glutamine amidotransferase type-1 domain. Catalysis depends on cysteine 86, which acts as the Nucleophile. Residues histidine 181 and glutamate 183 contribute to the active site. Positions 208 to 400 (WTPSKIAEDA…LGLPYDMVYR (193 aa)) constitute a GMPS ATP-PPase domain. An ATP-binding site is contributed by 235 to 241 (SGGVDSS).

In terms of assembly, homodimer.

It carries out the reaction XMP + L-glutamine + ATP + H2O = GMP + L-glutamate + AMP + diphosphate + 2 H(+). The protein operates within purine metabolism; GMP biosynthesis; GMP from XMP (L-Gln route): step 1/1. In terms of biological role, catalyzes the synthesis of GMP from XMP. The protein is GMP synthase [glutamine-hydrolyzing] of Pseudomonas fluorescens (strain ATCC BAA-477 / NRRL B-23932 / Pf-5).